The sequence spans 357 residues: tRNA-specific 2-thiouridylase MnmA (357 aa).

ATP contacts are provided by residues 7–14 and Met33; that span reads GMSGGVDS. The active-site Nucleophile is the Cys103. A disulfide bridge connects residues Cys103 and Cys200. Gly127 contacts ATP. The interaction with tRNA stretch occupies residues 150-152; sequence KDQ. Cys200 acts as the Cysteine persulfide intermediate in catalysis. The interval 306–307 is interaction with tRNA; the sequence is RY.

The protein belongs to the MnmA/TRMU family.

It is found in the cytoplasm. The enzyme catalyses S-sulfanyl-L-cysteinyl-[protein] + uridine(34) in tRNA + AH2 + ATP = 2-thiouridine(34) in tRNA + L-cysteinyl-[protein] + A + AMP + diphosphate + H(+). Functionally, catalyzes the 2-thiolation of uridine at the wobble position (U34) of tRNA, leading to the formation of s(2)U34. In Lachnoclostridium phytofermentans (strain ATCC 700394 / DSM 18823 / ISDg) (Clostridium phytofermentans), this protein is tRNA-specific 2-thiouridylase MnmA.